A 489-amino-acid chain; its full sequence is NAC domain-containing protein 74 (489 aa).

The NAC domain maps to 9–159; the sequence is LPPGFGFHPK…AYVLCRITKR (151 aa). Residues 108–165 mediate DNA binding; it reads IGTKKTLVFHEGRPPTGRRTEWIMHEYYIDERECQACPDMKDAYVLCRITKRNDWIPG. Residues 413 to 427 show a composition bias toward basic and acidic residues; that stretch reads KNQAHDVASTKRSDA. The disordered stretch occupies residues 413-435; sequence KNQAHDVASTKRSDAGKPSTELS. The helical transmembrane segment at 456-476 threads the bilayer; it reads WNMILVAGFAIGVAVVALHIG.

Widely expressed.

Its subcellular location is the nucleus. It is found in the cell membrane. Functionally, transcription activator involved in heat and endoplasmic reticulum (ER) stress responses. Regulates the expression of genes involved in ER protein folding and heat stress-responsive genes. Binds directly to the promoter of BZIP74 and regulates its expression in response to heat stress. In Oryza sativa subsp. japonica (Rice), this protein is NAC domain-containing protein 74.